Consider the following 933-residue polypeptide: Protein inturned (933 aa).

A disordered region spans residues 1-54; that stretch reads MASLPLCGSVRSPEGLPGDPSSQEDRQDYDPEDPVSGSGSYSPTSTDSNDLEPE. Residues 37–48 are compositionally biased toward polar residues; that stretch reads GSGSYSPTSTDS. In terms of domain architecture, PDZ spans 186-264; that stretch reads LVGIIHQTKW…PMQVKLTFEN (79 aa). A Phosphoserine modification is found at Ser675. The interval 703–742 is disordered; sequence LKTRKPSPSRSGGPDSGLEGEGVGLSPHTTESQGSHGSEE. Over residues 710-719 the composition is skewed to low complexity; the sequence is PSRSGGPDSG. Over residues 729 to 738 the composition is skewed to polar residues; that stretch reads PHTTESQGSH.

Belongs to the inturned family. In terms of assembly, component of the CPLANE (ciliogenesis and planar polarity effectors) complex, composed of INTU, FUZ and WDPCP. Interacts with CPLANE1. Interacts with NPHP4 and DAAM1; INTU is mediating the interaction between NPHP4 and DAAM1.

The protein resides in the cytoplasm. The protein localises to the cell surface. It localises to the cytoskeleton. It is found in the cilium basal body. Its subcellular location is the microtubule organizing center. The protein resides in the centrosome. The protein localises to the centriole. Plays a key role in ciliogenesis and embryonic development. Regulator of cilia formation by controlling the organization of the apical actin cytoskeleton and the positioning of the basal bodies at the apical cell surface, which in turn is essential for the normal orientation of elongating ciliary microtubules. Plays a key role in definition of cell polarity via its role in ciliogenesis but not via conversion extension. Has an indirect effect on hedgehog signaling. Proposed to function as core component of the CPLANE (ciliogenesis and planar polarity effectors) complex involved in the recruitment of peripheral IFT-A proteins to basal bodies. Required for recruitment of CPLANE2 to the mother centriole. Binds phosphatidylinositol 3-phosphate with highest affinity, followed by phosphatidylinositol 4-phosphate and phosphatidylinositol 5-phosphate. The polypeptide is Protein inturned (INTU) (Bos taurus (Bovine)).